The sequence spans 211 residues: Protein Nef (211 aa).

Gly2 carries N-myristoyl glycine; by host lipidation. Position 6 is a phosphoserine; by host (Ser6). The segment at 67–70 (EDEE) is acidic; interacts with host PACS1 and PACS2; stabilizes the interaction of NEF/MHC-I with host AP1M1; necessary for MHC-I internalization. The tract at residues 74-83 (PVRPQVPLRP) is SH3-binding; interaction with Src family tyrosine kinases. A PxxP; stabilizes the interaction of NEF/MHC-I with host AP1M1; necessary for MHC-I internalization motif is present at residues 77-80 (PQVP). The mediates dimerization, Nef-PTE1 interaction stretch occupies residues 113 to 129 (DILDLWVYHTQGYFPDW). The binding to ATP6V1H stretch occupies residues 153 to 185 (MDPDQVEEANEGENNSLLHPISLHGMDDPEKEV). Positions 169–170 (LL) match the Dileucine internalization motif; necessary for CD4 internalization motif. Residues 179-180 (DD) carry the Diacidic; necessary for CD4 internalization motif.

This sequence belongs to the lentivirus primate group Nef protein family. Monomer; cytosolic form. Homodimer; membrane bound form. Interacts with Nef associated p21-activated kinase (PAK2); this interaction activates PAK2. Associates with the Nef-MHC-I-AP1 complex; this complex is required for MHC-I internalization. Interacts (via C-terminus) with host PI3-kinase. Interacts with host PACS1; this interaction seems to be weak. Interacts with host PACS2. Interacts with host LCK and MAPK3; these interactions inhibit the kinase activity of the latter. Interacts with host ATP6V1H; this interaction may play a role in CD4 endocytosis. Associates with the CD4-Nef-AP2 complex; this complex is required for CD4 internalization. Interacts with host AP2 subunit alpha and AP2 subunit sigma2. Interacts with TCR-zeta chain; this interaction up-regulates the Fas ligand (FasL) surface expression. Interacts with host HCK, LYN, and SRC; these interactions activate the Src family kinases. Interacts with MAP3K5; this interaction inhibits the Fas and TNFR-mediated death signals. Interacts with beta-COP and PTE1. Interacts with human RACK1; this increases Nef phosphorylation by PKC. Interacts with TP53; this interaction decreases the half-life of TP53, protecting the infected cell against p53-mediated apoptosis. In terms of processing, the virion-associated Nef proteins are cleaved by the viral protease to release the soluble C-terminal core protein. Nef is probably cleaved concomitantly with viral structural proteins on maturation of virus particles. Myristoylated. Post-translationally, phosphorylated on serine residues, probably by host PKCdelta and theta.

It localises to the host cell membrane. The protein resides in the virion. It is found in the secreted. Its subcellular location is the host Golgi apparatus membrane. Its function is as follows. Factor of infectivity and pathogenicity, required for optimal virus replication. Alters numerous pathways of T-lymphocyte function and down-regulates immunity surface molecules in order to evade host defense and increase viral infectivity. Alters the functionality of other immunity cells, like dendritic cells, monocytes/macrophages and NK cells. In infected CD4(+) T-lymphocytes, down-regulates the surface MHC-I, mature MHC-II, CD4, CD28, CCR5 and CXCR4 molecules. Mediates internalization and degradation of host CD4 through the interaction of with the cytoplasmic tail of CD4, the recruitment of AP-2 (clathrin adapter protein complex 2), internalization through clathrin coated pits, and subsequent transport to endosomes and lysosomes for degradation. Diverts host MHC-I molecules to the trans-Golgi network-associated endosomal compartments by an endocytic pathway to finally target them for degradation. MHC-I down-regulation may involve AP-1 (clathrin adapter protein complex 1) or possibly Src family kinase-ZAP70/Syk-PI3K cascade recruited by PACS2. In consequence infected cells are masked for immune recognition by cytotoxic T-lymphocytes. Decreasing the number of immune receptors also prevents reinfection by more HIV particles (superinfection). Down-regulates host SERINC3 and SERINC5 thereby excluding these proteins from the viral particles. Virion infectivity is drastically higher when SERINC3 or SERINC5 are excluded from the viral envelope, because these host antiviral proteins impair the membrane fusion event necessary for subsequent virion penetration. Functionally, bypasses host T-cell signaling by inducing a transcriptional program nearly identical to that of anti-CD3 cell activation. Interaction with TCR-zeta chain up-regulates the Fas ligand (FasL). Increasing surface FasL molecules and decreasing surface MHC-I molecules on infected CD4(+) cells send attacking cytotoxic CD8+ T-lymphocytes into apoptosis. In terms of biological role, plays a role in optimizing the host cell environment for viral replication without causing cell death by apoptosis. Protects the infected cells from apoptosis in order to keep them alive until the next virus generation is ready to strike. Inhibits the Fas and TNFR-mediated death signals by blocking MAP3K5/ASK1. Decreases the half-life of TP53, protecting the infected cell against p53-mediated apoptosis. Inhibits the apoptotic signals regulated by the Bcl-2 family proteins through the formation of a Nef/PI3-kinase/PAK2 complex that leads to activation of PAK2 and induces phosphorylation of host BAD. Its function is as follows. Extracellular Nef protein targets CD4(+) T-lymphocytes for apoptosis by interacting with CXCR4 surface receptors. In Homo sapiens (Human), this protein is Protein Nef.